The chain runs to 368 residues: BTB/POZ and TAZ domain-containing protein 5 (368 aa).

A disordered region spans residues 1-25; it reads MENMDDFSPENVLAPPPPPPPMKKS. Positions 55–123 constitute a BTB domain; sequence ADVLIHTDDN…LYSSCYEKQD (69 aa). Residues 233-324 form a TAZ-type zinc finger; the sequence is QTYTQLYEAM…SEQCKVPLCS (92 aa). The interval 335–358 is caM-binding; that stretch reads RKDEKRWKLLVRNVLSTKRIGGSP.

Interacts with CUL3A. As to expression, preferentially expressed in young leaves, roots and stems.

Its subcellular location is the cytoplasm. Its pathway is protein modification; protein ubiquitination. May act as a substrate-specific adapter of an E3 ubiquitin-protein ligase complex (CUL3-RBX1-BTB) which mediates the ubiquitination and subsequent proteasomal degradation of target proteins. The chain is BTB/POZ and TAZ domain-containing protein 5 (BT5) from Arabidopsis thaliana (Mouse-ear cress).